The primary structure comprises 379 residues: Chaperone protein DnaJ (379 aa).

Residues 5-70 (DYYEVLGVGK…EKKAAYDQYG (66 aa)) enclose the J domain. The CR-type zinc-finger motif lies at 139 to 217 (GHEAQIRVPH…CHGQGKLKSQ (79 aa)). Positions 152, 155, 169, 172, 191, 194, 205, and 208 each coordinate Zn(2+). CXXCXGXG motif repeat units lie at residues 152–159 (CEHCHGNG), 169–176 (CPTCNGVG), 191–198 (CPKCHGSG), and 205–212 (CTKCHGQG).

This sequence belongs to the DnaJ family. In terms of assembly, homodimer. The cofactor is Zn(2+).

Its subcellular location is the cytoplasm. Functionally, participates actively in the response to hyperosmotic and heat shock by preventing the aggregation of stress-denatured proteins and by disaggregating proteins, also in an autonomous, DnaK-independent fashion. Unfolded proteins bind initially to DnaJ; upon interaction with the DnaJ-bound protein, DnaK hydrolyzes its bound ATP, resulting in the formation of a stable complex. GrpE releases ADP from DnaK; ATP binding to DnaK triggers the release of the substrate protein, thus completing the reaction cycle. Several rounds of ATP-dependent interactions between DnaJ, DnaK and GrpE are required for fully efficient folding. Also involved, together with DnaK and GrpE, in the DNA replication of plasmids through activation of initiation proteins. This Cupriavidus metallidurans (strain ATCC 43123 / DSM 2839 / NBRC 102507 / CH34) (Ralstonia metallidurans) protein is Chaperone protein DnaJ.